The sequence spans 539 residues: Phospho-2-dehydro-3-deoxyheptonate aldolase 2, chloroplastic (539 aa).

Disordered stretches follow at residues Met-1 to Gln-23 and Val-41 to Lys-70. The transit peptide at Met-1 to Gln-54 directs the protein to the chloroplast. The span at Ser-7–Ala-21 shows a compositional bias: low complexity.

This sequence belongs to the class-II DAHP synthase family.

It is found in the plastid. The protein resides in the chloroplast. The enzyme catalyses D-erythrose 4-phosphate + phosphoenolpyruvate + H2O = 7-phospho-2-dehydro-3-deoxy-D-arabino-heptonate + phosphate. It functions in the pathway metabolic intermediate biosynthesis; chorismate biosynthesis; chorismate from D-erythrose 4-phosphate and phosphoenolpyruvate: step 1/7. The chain is Phospho-2-dehydro-3-deoxyheptonate aldolase 2, chloroplastic (DAHPS2) from Oryza sativa subsp. japonica (Rice).